The chain runs to 207 residues: LexA repressor (207 aa).

The segment at residues 28–48 (VREIGEAVGLASSFTVHGHLS) is a DNA-binding region (H-T-H motif). Catalysis depends on for autocatalytic cleavage activity residues S130 and K168.

The protein belongs to the peptidase S24 family. Homodimer.

It catalyses the reaction Hydrolysis of Ala-|-Gly bond in repressor LexA.. In terms of biological role, represses a number of genes involved in the response to DNA damage (SOS response), including recA and lexA. In the presence of single-stranded DNA, RecA interacts with LexA causing an autocatalytic cleavage which disrupts the DNA-binding part of LexA, leading to derepression of the SOS regulon and eventually DNA repair. In Staphylococcus aureus (strain Newman), this protein is LexA repressor.